A 173-amino-acid polypeptide reads, in one-letter code: Photosystem I assembly protein Ycf3 (173 aa).

TPR repeat units lie at residues 35–68, 72–105, and 120–153; these read AFAY…EDDP, SYIL…NPRM, and GEKA…APNN.

Belongs to the Ycf3 family.

The protein localises to the cellular thylakoid membrane. Essential for the assembly of the photosystem I (PSI) complex. May act as a chaperone-like factor to guide the assembly of the PSI subunits. This Trichodesmium erythraeum (strain IMS101) protein is Photosystem I assembly protein Ycf3.